The chain runs to 454 residues: LETM1 domain-containing protein YLH47, mitochondrial (454 aa).

Residues 1-45 constitute a mitochondrion transit peptide; it reads MLKYRSLPIKRAIHHPAPGITPISPRIMVSRLRVIPSFNLKFNRW. Topologically, residues 46 to 136 are mitochondrial intermembrane; that stretch reads NSSVPESSKK…LKRTTQDIVR (91 aa). A disordered region spans residues 51 to 73; sequence ESSKKELKTTDGNQESASKVSPV. Residues 137–157 form a helical membrane-spanning segment; that stretch reads LVPFAAFLIIPFAELLLPFAL. Topologically, residues 158–454 are mitochondrial matrix; the sequence is KLFPNLLPST…IGEAAAIKEK (297 aa). A Letm1 RBD domain is found at 177 to 371; sequence KLENLRNTRK…LCDVLIGIPD (195 aa). The stretch at 376–423 forms a coiled coil; that stretch reads EVKVNVVKEDEASAKQKLKQLREQEEIMKEEEQQEENAIVSVKDELSL. Composition is skewed to basic and acidic residues over residues 420-430 and 437-454; these read ELSLDDQDKNI and VKPH…IKEK. The tract at residues 420–454 is disordered; that stretch reads ELSLDDQDKNIDAAAPDVKPHDTKPIGEAAAIKEK.

As to quaternary structure, associates with the mitochondrial ribosomes.

The protein resides in the mitochondrion inner membrane. In terms of biological role, involved in mitochondrial potassium homeostasis through the mitochondrial K(+)/H(+) exchange regulation. The chain is LETM1 domain-containing protein YLH47, mitochondrial (YLH47) from Saccharomyces cerevisiae (strain ATCC 204508 / S288c) (Baker's yeast).